Consider the following 452-residue polypeptide: Keratin, type I cytoskeletal 42 (452 aa).

The segment at Thr-4–Ser-93 is head. Coiled coils occupy residues Ser-93 to Lys-132 and Asn-188 to Thr-407. The interval Glu-94 to Trp-129 is coil 1A. The IF rod domain maps to Glu-94–Leu-405. The segment at Tyr-130 to Thr-147 is linker 1. The coil 1B stretch occupies residues Ile-148–Leu-239. Residues Arg-240–Ile-262 are linker 12. The segment at Leu-263–Glu-401 is coil 2. The tract at residues Asp-402–His-452 is tail.

The protein belongs to the intermediate filament family. Heterodimer of a type I and a type II keratin. Colocalizes with KRT8/KRT18 filament network.

It localises to the cytoplasm. This chain is Keratin, type I cytoskeletal 42, found in Rattus norvegicus (Rat).